Here is a 232-residue protein sequence, read N- to C-terminus: Rho-related GTP-binding protein Rho6 (232 aa).

Residues Gln-23–Ala-28, Tyr-38–Thr-45, Asp-67–Ser-71, Cys-125–Asp-128, and Ala-169–Phe-170 each bind GTP. An Effector region motif is present at residues Tyr-42–Tyr-50. Cys-229 is modified (cysteine methyl ester). The S-geranylgeranyl cysteine moiety is linked to residue Cys-229. A propeptide spans Ser-230–Met-232 (removed in mature form).

It belongs to the small GTPase superfamily. Rho family. Binds GRB7 and PLXNB1. Interacts with PLXNA2. Interacts with UBXD5.

The protein resides in the cell membrane. The protein localises to the cytoplasm. Its subcellular location is the cytoskeleton. Functionally, lacks intrinsic GTPase activity. Has a low affinity for GDP, and constitutively binds GTP. Controls rearrangements of the actin cytoskeleton. Induces the Rac-dependent neuritic process formation in part by disruption of the cortical actin filaments. Causes the formation of many neuritic processes from the cell body with disruption of the cortical actin filaments. The polypeptide is Rho-related GTP-binding protein Rho6 (Rnd1) (Mus musculus (Mouse)).